The primary structure comprises 202 residues: Stress enhanced protein 2, chloroplastic (202 aa).

The transit peptide at 1–60 (MAMATRAIRYQLPSPRFRAPRCESSEPIKQIQIQQRPRGGDLAENGKIVLQPRLCTLRSY) directs the protein to the chloroplast. The next 2 membrane-spanning stretches (helical) occupy residues 111–131 (LAMIVFAVTVTEEIVTGNSLF) and 142–162 (AIGAGLAAMGCAAMFAWLTIS).

Belongs to the ELIP/psbS family.

The protein resides in the plastid. It localises to the chloroplast thylakoid membrane. Its function is as follows. May be involved in non-photochemical quenching, a process that maintains the balance between dissipation and utilization of light energy to minimize generation of oxidizing molecules, thereby protecting the plant against photo-oxidative damage. May play a photoprotective role in the thylakoid membrane in response to light stress. The protein is Stress enhanced protein 2, chloroplastic of Arabidopsis thaliana (Mouse-ear cress).